Consider the following 451-residue polypeptide: Trigger factor (451 aa).

The PPIase FKBP-type domain occupies Asp-170–Pro-256.

The protein belongs to the FKBP-type PPIase family. Tig subfamily.

The protein localises to the cytoplasm. The enzyme catalyses [protein]-peptidylproline (omega=180) = [protein]-peptidylproline (omega=0). Its function is as follows. Involved in protein export. Acts as a chaperone by maintaining the newly synthesized protein in an open conformation. Functions as a peptidyl-prolyl cis-trans isomerase. The polypeptide is Trigger factor (Treponema denticola (strain ATCC 35405 / DSM 14222 / CIP 103919 / JCM 8153 / KCTC 15104)).